Consider the following 477-residue polypeptide: 3-isopropylmalate dehydratase large subunit (477 aa).

Cysteine 347, cysteine 407, and cysteine 410 together coordinate [4Fe-4S] cluster. A disordered region spans residues 418–442 (LAPGERSASTSNRNFEGRQGKGGRT).

The protein belongs to the aconitase/IPM isomerase family. LeuC type 1 subfamily. As to quaternary structure, heterodimer of LeuC and LeuD. The cofactor is [4Fe-4S] cluster.

It catalyses the reaction (2R,3S)-3-isopropylmalate = (2S)-2-isopropylmalate. Its pathway is amino-acid biosynthesis; L-leucine biosynthesis; L-leucine from 3-methyl-2-oxobutanoate: step 2/4. Functionally, catalyzes the isomerization between 2-isopropylmalate and 3-isopropylmalate, via the formation of 2-isopropylmaleate. The polypeptide is 3-isopropylmalate dehydratase large subunit (Streptomyces avermitilis (strain ATCC 31267 / DSM 46492 / JCM 5070 / NBRC 14893 / NCIMB 12804 / NRRL 8165 / MA-4680)).